The sequence spans 227 residues: RNA pyrophosphohydrolase (227 aa).

The 144-residue stretch at 6-149 (GFRPNVGIIL…KRDVYQMALT (144 aa)) folds into the Nudix hydrolase domain. Positions 38 to 59 (GGIKYGETPEQAMYRELHEEIG) match the Nudix box motif. Positions 165–227 (PYGTHGAHGA…PVSTTRSTDD (63 aa)) are disordered. Over residues 192–201 (AQAAQQADAD) the composition is skewed to low complexity. Positions 217 to 227 (TPVSTTRSTDD) are enriched in polar residues.

It belongs to the Nudix hydrolase family. RppH subfamily. A divalent metal cation serves as cofactor.

Its function is as follows. Accelerates the degradation of transcripts by removing pyrophosphate from the 5'-end of triphosphorylated RNA, leading to a more labile monophosphorylated state that can stimulate subsequent ribonuclease cleavage. In Cupriavidus taiwanensis (strain DSM 17343 / BCRC 17206 / CCUG 44338 / CIP 107171 / LMG 19424 / R1) (Ralstonia taiwanensis (strain LMG 19424)), this protein is RNA pyrophosphohydrolase.